Consider the following 184-residue polypeptide: Gremlin-1 (184 aa).

The N-terminal stretch at 1-24 (MVRTLYAIGAVFLLTGFLLPTAEG) is a signal peptide. The segment at 24–77 (GRKRNRGSQGAIPPPDKDQPNDSEQMQTQQQSGSRHRERGKGTSMPAEEVLESS) is disordered. N-linked (GlcNAc...) asparagine glycosylation occurs at Asn44. The segment covering 45 to 56 (DSEQMQTQQQSG) has biased composition (polar residues). Disulfide bonds link Cys94-Cys144, Cys108-Cys158, Cys118-Cys176, and Cys122-Cys178. Residues 94-184 (CKTQPLKQTI…ECRCISIDLD (91 aa)) form the CTCK domain.

It belongs to the DAN family.

The protein localises to the secreted. Cytokine that may play a role in the development of the medial pallium and during optic nerve and pecten development by modulating BMP signaling. The chain is Gremlin-1 (GREM1) from Gallus gallus (Chicken).